The primary structure comprises 735 residues: Two pore calcium channel protein 1B (735 aa).

At 1–76 (MEEYLLPGES…ELYFMFTRFD (76 aa)) the chain is on the cytoplasmic side. A helical transmembrane segment spans residues 77 to 97 (FLWSLNYLALVVLNFFEKPLW). At 98–125 (CSKHLAESCNNRDYYYLGELPFLTGAES) the chain is on the extracellular side. A helical membrane pass occupies residues 126-146 (LIFEGVTLLLLIIHILFPISY). At 147–161 (EGFNLYWRSLLNRLK) the chain is on the cytoplasmic side. A helical transmembrane segment spans residues 162–182 (VILLLILVADIVVYILLPADF). A topological domain (extracellular) is located at residue Tyr183. The chain crosses the membrane as a helical; Voltage-sensor span at residues 184–202 (YLPFRIAPYLRVVFFILNI). Topologically, residues 203–208 (RELRDS) are cytoplasmic. Residues 209 to 229 (FFILAGMLGTYLNVVALSALF) form a helical membrane-spanning segment. Residues 230 to 248 (LLFSSWLAYVFFEDTRQGK) are Extracellular-facing. The segment at residues 249-263 (TTFTSYGTTLYQMFV) is an intramembrane region (pore-forming). The Extracellular portion of the chain corresponds to 264 to 286 (LFTTSNNPDVWIPAYKDSRWYCL). A helical membrane pass occupies residues 287–307 (FFVLYVLLGVYFVTNLILAVV). At 308–431 (YDSFKSELVK…ASEKLRGFIR (124 aa)) the chain is on the cytoplasmic side. EF-hand domains are found at residues 325–360 (LRLR…LNKY) and 366–401 (ISGD…IGLR). A helical membrane pass occupies residues 432-452 (GATFEYIIVFVLLVNLVAVII). Residues 453–470 (ETTLDIQNNSGQTFWQKV) lie on the Extracellular side of the membrane. Asn460 is a glycosylation site (N-linked (GlcNAc...) asparagine). A helical membrane pass occupies residues 471–491 (EFTFGWLYVIEMALKVYTYGF). At 492–501 (ENYWRDGQNR) the chain is on the cytoplasmic side. Residues 502–522 (FDFIVTWVIVIGETTTFVAPD) traverse the membrane as a helical segment. The Extracellular segment spans residues 523–531 (DLTFLSNGE). Residues 532 to 549 (WIRYLLIARMLRLIRLLM) form a helical; Voltage-sensor membrane-spanning segment. At 550–560 (HVERYRAFVAT) the chain is on the cytoplasmic side. A helical membrane pass occupies residues 561–581 (FLTLIPSLMPYLGTIFCILCF). At 582 to 618 (YCSLGLQIFGGIVNTGNPNLAQTDLAGNDYLLFNFND) the chain is on the extracellular side. An intramembrane region (pore-forming) is located at residues 619 to 633 (YPNGMVTLFNILVMG). Residues 634-654 (NWQVWMQSYKELTGTSWTYAY) are Extracellular-facing. The helical transmembrane segment at 655–675 (FVSFYLISVLWLLNLIVAFVL) threads the bilayer. Residues 676–735 (EAFQAEMDLEASARCVDGDDKEAKRERRRNVGTKTRSQRVDFLLHHMLRSELTECSNDNP) are Cytoplasmic-facing.

Belongs to the calcium channel alpha-1 subunit (TC 1.A.1.11) family. Two pore calcium channel subfamily. As to quaternary structure, homodimer.

The protein localises to the membrane. Inhibited by Al(3+), La(3+) and Gd(3+). Up-regulated by H(2)O(2), cryptogein, salicylic acid (SA) and cold shock. In terms of biological role, functions as a voltage-gated inward-rectifying Ca(2+) channel (VDCC) across the plasma membrane that mediates sucrose-induced Ca(2+) influx in autotrophically grown leaf cells. Acts as the major ROS-responsive Ca(2+) channel and is the possible target of Al-dependent inhibition. Plays a regulatory role in defense responses. The polypeptide is Two pore calcium channel protein 1B (TPC1B) (Nicotiana tabacum (Common tobacco)).